A 213-amino-acid chain; its full sequence is Kynurenine formamidase (213 aa).

Position 18 (Trp18) interacts with substrate. The Zn(2+) site is built by His48, His52, and Asp54. The active-site Proton donor/acceptor is the His58. Zn(2+)-binding residues include His160 and Glu172.

The protein belongs to the Cyclase 1 superfamily. KynB family. Homodimer. Requires Zn(2+) as cofactor.

The catalysed reaction is N-formyl-L-kynurenine + H2O = L-kynurenine + formate + H(+). The protein operates within amino-acid degradation; L-tryptophan degradation via kynurenine pathway; L-kynurenine from L-tryptophan: step 2/2. Its function is as follows. Catalyzes the hydrolysis of N-formyl-L-kynurenine to L-kynurenine, the second step in the kynurenine pathway of tryptophan degradation. The chain is Kynurenine formamidase from Burkholderia cenocepacia (strain HI2424).